We begin with the raw amino-acid sequence, 384 residues long: Cytochrome b (384 aa).

4 consecutive transmembrane segments (helical) span residues 32–52, 76–98, 113–133, and 179–199; these read VGSL…FLAM, WLIR…LHIG, LWVI…MGYC, and FFAL…MHLM. Positions 82 and 96 each coordinate heme b. The heme b site is built by H183 and H197. Residue H202 coordinates a ubiquinone. Transmembrane regions (helical) follow at residues 225 to 245, 289 to 309, 321 to 341, and 348 to 368; these read FIFK…LFVF, LGGV…PYTD, LSKF…NLGQ, and YIEL…LIVP.

The protein belongs to the cytochrome b family. Fungal cytochrome b-c1 complex contains 10 subunits; 3 respiratory subunits, 2 core proteins and 5 low-molecular weight proteins. Cytochrome b-c1 complex is a homodimer. It depends on heme b as a cofactor.

The protein localises to the mitochondrion inner membrane. Component of the ubiquinol-cytochrome c reductase complex (complex III or cytochrome b-c1 complex) that is part of the mitochondrial respiratory chain. The b-c1 complex mediates electron transfer from ubiquinol to cytochrome c. Contributes to the generation of a proton gradient across the mitochondrial membrane that is then used for ATP synthesis. This is Cytochrome b (COB) from Candida parapsilosis (Yeast).